Reading from the N-terminus, the 170-residue chain is Lipoprotein signal peptidase (170 aa).

3 consecutive transmembrane segments (helical) span residues 5–25, 70–90, and 98–118; these read VYHQYWFWYLAAFVVFLLDQG, WFFTIVAVAASVLLIVWICRV, and AFALSFILGGAVGNLYDRIIH. Residues D123 and D141 contribute to the active site. Residues 137-157 form a helical membrane-spanning segment; it reads FNLADAAISLGAMVLIADLFI.

It belongs to the peptidase A8 family.

The protein resides in the cell inner membrane. It carries out the reaction Release of signal peptides from bacterial membrane prolipoproteins. Hydrolyzes -Xaa-Yaa-Zaa-|-(S,diacylglyceryl)Cys-, in which Xaa is hydrophobic (preferably Leu), and Yaa (Ala or Ser) and Zaa (Gly or Ala) have small, neutral side chains.. It functions in the pathway protein modification; lipoprotein biosynthesis (signal peptide cleavage). This protein specifically catalyzes the removal of signal peptides from prolipoproteins. The polypeptide is Lipoprotein signal peptidase (Cellvibrio japonicus (strain Ueda107) (Pseudomonas fluorescens subsp. cellulosa)).